Reading from the N-terminus, the 720-residue chain is Phosphoribosylformylglycinamidine synthase subunit PurL (720 aa).

The active site involves His-47. ATP is bound by residues Tyr-50 and Lys-89. Glu-91 contributes to the Mg(2+) binding site. Substrate-binding positions include 92–95 (SHNH) and Arg-114. His-93 serves as the catalytic Proton acceptor. Asp-115 provides a ligand contact to Mg(2+). Gln-238 contacts substrate. Asp-266 serves as a coordination point for Mg(2+). 310-312 (ESQ) serves as a coordination point for substrate. The ATP site is built by Asp-488 and Gly-525. Asn-526 is a binding site for Mg(2+). Ser-528 is a binding site for substrate.

This sequence belongs to the FGAMS family. In terms of assembly, monomer. Part of the FGAM synthase complex composed of 1 PurL, 1 PurQ and 2 PurS subunits.

The protein resides in the cytoplasm. The catalysed reaction is N(2)-formyl-N(1)-(5-phospho-beta-D-ribosyl)glycinamide + L-glutamine + ATP + H2O = 2-formamido-N(1)-(5-O-phospho-beta-D-ribosyl)acetamidine + L-glutamate + ADP + phosphate + H(+). It participates in purine metabolism; IMP biosynthesis via de novo pathway; 5-amino-1-(5-phospho-D-ribosyl)imidazole from N(2)-formyl-N(1)-(5-phospho-D-ribosyl)glycinamide: step 1/2. In terms of biological role, part of the phosphoribosylformylglycinamidine synthase complex involved in the purines biosynthetic pathway. Catalyzes the ATP-dependent conversion of formylglycinamide ribonucleotide (FGAR) and glutamine to yield formylglycinamidine ribonucleotide (FGAM) and glutamate. The FGAM synthase complex is composed of three subunits. PurQ produces an ammonia molecule by converting glutamine to glutamate. PurL transfers the ammonia molecule to FGAR to form FGAM in an ATP-dependent manner. PurS interacts with PurQ and PurL and is thought to assist in the transfer of the ammonia molecule from PurQ to PurL. The protein is Phosphoribosylformylglycinamidine synthase subunit PurL of Cereibacter sphaeroides (strain KD131 / KCTC 12085) (Rhodobacter sphaeroides).